The chain runs to 545 residues: uncharacterized protein (545 aa).

2 disordered regions span residues 1–162 and 200–250; these read MSSG…DPQE and YPPV…EPPP. Residues 86 to 100 are compositionally biased toward polar residues; the sequence is NYRSHSSADYLTPNS. 2 stretches are compositionally biased toward low complexity: residues 109–128 and 141–152; these read TTPR…TATK and SGASTSSGTSST. Polar residues-rich tracts occupy residues 212–221 and 228–244; these read SSRTGTLQRT and ISST…QMQS. One can recognise a PDZ domain in the interval 458–540; it reads RVLVEKMMPG…VTITLLPAVG (83 aa).

This is an uncharacterized protein from Caenorhabditis elegans.